Reading from the N-terminus, the 730-residue chain is Translation factor GUF1 homolog, mitochondrial (730 aa).

The tr-type G domain maps to 106-289; that stretch reads ELIRNFCIIA…AVVVSIPPPK (184 aa). Residues 115–122, 182–186, and 236–239 contribute to the GTP site; these read AHVDHGKS, DTPGH, and NKID.

This sequence belongs to the TRAFAC class translation factor GTPase superfamily. Classic translation factor GTPase family. LepA subfamily.

It localises to the mitochondrion inner membrane. It catalyses the reaction GTP + H2O = GDP + phosphate + H(+). In terms of biological role, promotes mitochondrial protein synthesis. May act as a fidelity factor of the translation reaction, by catalyzing a one-codon backward translocation of tRNAs on improperly translocated ribosomes. Binds to mitochondrial ribosomes in a GTP-dependent manner. The sequence is that of Translation factor GUF1 homolog, mitochondrial from Theileria annulata.